Reading from the N-terminus, the 105-residue chain is Late embryogenesis abundant protein Lea5-A (105 aa).

It belongs to the LEA type 3 family.

This is Late embryogenesis abundant protein Lea5-A (LEA5-A) from Gossypium hirsutum (Upland cotton).